The following is a 1293-amino-acid chain: Putative DNA-directed RNA polymerase 008R (1293 aa).

Residues C61, C64, C71, H74, C99, C102, and C123 each contribute to the Zn(2+) site. A DNA-binding region spans residues 270 to 339; the sequence is TNRKPMAGIK…PVMVTPFNVS (70 aa). Basic and acidic residues predominate over residues 354–376; the sequence is EMRDGTVHRPSEWRPSHGDHMET. Positions 354 to 390 are disordered; the sequence is EMRDGTVHRPSEWRPSHGDHMETADGSPLGRVTRPSY. 3 residues coordinate Mg(2+): D474, D476, and D478. The alpha-amanitin binding stretch occupies residues 724-734; the sequence is GQQYVGGSRPG. The bridging helix stretch occupies residues 776–788; that stretch reads PREVFFHAKSGRE.

It belongs to the RNA polymerase beta' chain family.

The catalysed reaction is RNA(n) + a ribonucleoside 5'-triphosphate = RNA(n+1) + diphosphate. Component of the DNA-dependent RNA polymerase that catalyzes the transcription of DNA into RNA using the four ribonucleoside triphosphates as substrates. Largest and catalytic component of RNA polymerase II which synthesizes mRNA precursors and many functional non-coding RNAs. Forms the polymerase active center together with the second largest subunit. This Frog virus 3 (isolate Goorha) (FV-3) protein is Putative DNA-directed RNA polymerase 008R.